The sequence spans 329 residues: tRNA N6-adenosine threonylcarbamoyltransferase (329 aa).

His-108, His-112, and Tyr-129 together coordinate Fe cation. Substrate contacts are provided by residues 129–133, Asp-161, Glu-182, and Ser-261; that span reads YVSGG. Asp-289 provides a ligand contact to Fe cation.

The protein belongs to the KAE1 / TsaD family. Fe(2+) is required as a cofactor.

It is found in the cytoplasm. It catalyses the reaction L-threonylcarbamoyladenylate + adenosine(37) in tRNA = N(6)-L-threonylcarbamoyladenosine(37) in tRNA + AMP + H(+). Required for the formation of a threonylcarbamoyl group on adenosine at position 37 (t(6)A37) in tRNAs that read codons beginning with adenine. Is probably involved in the transfer of the threonylcarbamoyl moiety of threonylcarbamoyl-AMP (TC-AMP) to the N6 group of A37. In Ignicoccus hospitalis (strain KIN4/I / DSM 18386 / JCM 14125), this protein is tRNA N6-adenosine threonylcarbamoyltransferase.